Here is a 327-residue protein sequence, read N- to C-terminus: Zinc finger C2HC domain-containing protein 1A (327 aa).

The C2HC/C3H-type 1 zinc-finger motif lies at 13-42 (ELVPCKICGRSFFPKVLKKHVPICQKTAAK). Residues Cys17, Cys20, His32, and Cys36 each coordinate Zn(2+). Disordered regions lie at residues 40-96 (AAKR…KHEE) and 108-131 (NQVIKDGGPLPPPPPPSYDPDYIQ). Residues 46–56 (VFDSGRQRAEG) show a composition bias toward basic and acidic residues. Over residues 63-76 (KPIKPKLQSSSSSS) the composition is skewed to low complexity. A compositionally biased stretch (pro residues) spans 116–125 (PLPPPPPPSY). The segment at 128-157 (DYIQCPYCQRRFGENAADRHIKFCKEQASR) adopts a C2HC/C3H-type 2 zinc-finger fold. The Zn(2+) site is built by Cys132, Cys135, His147, and Cys151. A disordered region spans residues 154–271 (QASRISNKSK…NPSTGIGMNK (118 aa)). Polar residues predominate over residues 187-199 (NSPTASSVSSRLP). Residues 211-229 (GIPSSKPSSTGSIKSTPSG) are compositionally biased toward low complexity. 2 stretches are compositionally biased toward polar residues: residues 233–245 (LRNNSSSLTSPPS) and 255–267 (VSQSSLRNPSTGI).

It belongs to the ZC2HC1 family. Zn(2+) is required as a cofactor.

The chain is Zinc finger C2HC domain-containing protein 1A (zc2hc1a) from Danio rerio (Zebrafish).